The primary structure comprises 114 residues: MGFRLLCCVAFCLLGAGPVDSGVTQTPKHLITATGQRVTLRCSPRSGDLSVYWYQQSLDQGLQFLIHYYNGEERAKGNILERFSAQQFPDLHSELNLSSLELGDSALYFCASSV.

A signal peptide spans 1–21; sequence MGFRLLCCVAFCLLGAGPVDS. One can recognise an Ig-like domain in the interval 22-114; the sequence is GVTQTPKHLI…SALYFCASSV (93 aa). Cysteines 42 and 110 form a disulfide. Asn-96 carries an N-linked (GlcNAc...) asparagine glycan.

In terms of assembly, alpha-beta TR is a heterodimer composed of an alpha and beta chain; disulfide-linked. The alpha-beta TR is associated with the transmembrane signaling CD3 coreceptor proteins to form the TR-CD3 (TcR or TCR). The assembly of alpha-beta TR heterodimers with CD3 occurs in the endoplasmic reticulum where a single alpha-beta TR heterodimer associates with one CD3D-CD3E heterodimer, one CD3G-CD3E heterodimer and one CD247 homodimer forming a stable octameric structure. CD3D-CD3E and CD3G-CD3E heterodimers preferentially associate with TR alpha and TR beta chains, respectively. The association of the CD247 homodimer is the last step of TcR assembly in the endoplasmic reticulum and is required for transport to the cell surface.

It localises to the cell membrane. Its function is as follows. V region of the variable domain of T cell receptor (TR) beta chain that participates in the antigen recognition. Alpha-beta T cell receptors are antigen specific receptors which are essential to the immune response and are present on the cell surface of T lymphocytes. Recognize peptide-major histocompatibility (MH) (pMH) complexes that are displayed by antigen presenting cells (APC), a prerequisite for efficient T cell adaptive immunity against pathogens. Binding of alpha-beta TR to pMH complex initiates TR-CD3 clustering on the cell surface and intracellular activation of LCK that phosphorylates the ITAM motifs of CD3G, CD3D, CD3E and CD247 enabling the recruitment of ZAP70. In turn ZAP70 phosphorylates LAT, which recruits numerous signaling molecules to form the LAT signalosome. The LAT signalosome propagates signal branching to three major signaling pathways, the calcium, the mitogen-activated protein kinase (MAPK) kinase and the nuclear factor NF-kappa-B (NF-kB) pathways, leading to the mobilization of transcription factors that are critical for gene expression and essential for T cell growth and differentiation. The T cell repertoire is generated in the thymus, by V-(D)-J rearrangement. This repertoire is then shaped by intrathymic selection events to generate a peripheral T cell pool of self-MH restricted, non-autoaggressive T cells. Post-thymic interaction of alpha-beta TR with the pMH complexes shapes TR structural and functional avidity. The sequence is that of T cell receptor beta variable 9 from Homo sapiens (Human).